A 207-amino-acid chain; its full sequence is Guanylate kinase (207 aa).

In terms of domain architecture, Guanylate kinase-like spans 4 to 184 (GTLYIVSAPS…ALSDLKTIIR (181 aa)). 11–18 (APSGAGKS) contacts ATP.

It belongs to the guanylate kinase family.

Its subcellular location is the cytoplasm. It catalyses the reaction GMP + ATP = GDP + ADP. The enzyme catalyses dZMP + ATP = dZDP + ADP. The protein operates within purine metabolism. Its function is as follows. Essential for recycling GMP and indirectly, cGMP. In terms of biological role, (Microbial infection) Catalyzes the phosphorylation of dZMP to dZDP, when the bacterium is infected by a phage that produces the substrate for the synthesis of dZTP (2- amino-2'-deoxyadenosine 5'-triphosphate), which is then used by the phage as a DNA polymerase substrate. This chain is Guanylate kinase, found in Salmonella choleraesuis (strain SC-B67).